The following is a 265-amino-acid chain: Undecaprenyl-diphosphatase (265 aa).

The next 7 helical transmembrane spans lie at 38 to 58, 75 to 95, 108 to 128, 135 to 155, 181 to 201, 215 to 235, and 244 to 264; these read RSDF…CLAL, RDYV…GLIV, PVAW…HVAG, VVTW…GVFP, FVFM…LLEM, VAVA…WLLS, and VFAV…PAAA.

This sequence belongs to the UppP family.

The protein resides in the cell inner membrane. The catalysed reaction is di-trans,octa-cis-undecaprenyl diphosphate + H2O = di-trans,octa-cis-undecaprenyl phosphate + phosphate + H(+). Its function is as follows. Catalyzes the dephosphorylation of undecaprenyl diphosphate (UPP). Confers resistance to bacitracin. This is Undecaprenyl-diphosphatase from Xanthomonas oryzae pv. oryzae (strain MAFF 311018).